Consider the following 206-residue polypeptide: Large ribosomal subunit protein uL3 (206 aa).

Residues 127-151 form a disordered region; the sequence is SGGPSSHGSKFHRHLGGTGQATTPA.

Belongs to the universal ribosomal protein uL3 family. As to quaternary structure, part of the 50S ribosomal subunit. Forms a cluster with proteins L14 and L19.

Its function is as follows. One of the primary rRNA binding proteins, it binds directly near the 3'-end of the 23S rRNA, where it nucleates assembly of the 50S subunit. The sequence is that of Large ribosomal subunit protein uL3 from Borrelia garinii subsp. bavariensis (strain ATCC BAA-2496 / DSM 23469 / PBi) (Borreliella bavariensis).